Consider the following 368-residue polypeptide: Galactoside 2-alpha-L-fucosyltransferase Sec1 (368 aa).

The Cytoplasmic portion of the chain corresponds to 1–20 (MPSDSCLLSLTVLQRLRAIC). A helical; Signal-anchor for type II membrane protein membrane pass occupies residues 21–41 (PPLSTFYLFFVIFVVSTIFHC). At 42-368 (HRRLGLVPAP…APKRHWGALL (327 aa)) the chain is on the lumenal side. 3 N-linked (GlcNAc...) asparagine glycosylation sites follow: N195, N289, and N315.

Belongs to the glycosyltransferase 11 family.

It is found in the golgi apparatus. The protein resides in the golgi stack membrane. The catalysed reaction is a ganglioside GM1 + GDP-beta-L-fucose = a ganglioside Fuc-GM1 + GDP + H(+). It functions in the pathway protein modification; protein glycosylation. Catalyzes the transfer of alpha 1,2-linked fucose to ganglioside GM1 and galacto-N-biose. The chain is Galactoside 2-alpha-L-fucosyltransferase Sec1 from Mus musculus (Mouse).